Here is a 341-residue protein sequence, read N- to C-terminus: Elongation factor Ts (341 aa).

The tract at residues Thr-80–Val-83 is involved in Mg(2+) ion dislocation from EF-Tu.

This sequence belongs to the EF-Ts family.

It is found in the cytoplasm. In terms of biological role, associates with the EF-Tu.GDP complex and induces the exchange of GDP to GTP. It remains bound to the aminoacyl-tRNA.EF-Tu.GTP complex up to the GTP hydrolysis stage on the ribosome. This chain is Elongation factor Ts, found in Lactobacillus acidophilus (strain ATCC 700396 / NCK56 / N2 / NCFM).